The following is a 141-amino-acid chain: ATP synthase epsilon chain (141 aa).

This sequence belongs to the ATPase epsilon chain family. F-type ATPases have 2 components, CF(1) - the catalytic core - and CF(0) - the membrane proton channel. CF(1) has five subunits: alpha(3), beta(3), gamma(1), delta(1), epsilon(1). CF(0) has three main subunits: a, b and c.

The protein resides in the cell inner membrane. Functionally, produces ATP from ADP in the presence of a proton gradient across the membrane. The protein is ATP synthase epsilon chain of Burkholderia multivorans (strain ATCC 17616 / 249).